The following is a 477-amino-acid chain: E3 ubiquitin-protein ligase TRIM17 (477 aa).

The RING-type zinc finger occupies 16–66 (CSICLDYFTDPVMTACGHNFCRECIQMSWEKGKVKKGKKKQKGSFPCPECR). Residues 94-135 (QKRDLCQAHQEPLKLFCQDDQSPICVVCREAQEHRMHRVLPL) form a B box-type zinc finger. Cys-99, His-102, Cys-121, and His-127 together coordinate Zn(2+). A coiled-coil region spans residues 135–226 (LDEAAREYKL…KLQDSKASLD (92 aa)). The 200-residue stretch at 276–475 (AIKTLCRVPG…MVISTVTMWV (200 aa)) folds into the B30.2/SPRY domain.

The protein belongs to the TRIM/RBCC family. As to quaternary structure, interacts (via coiled coil) with TRIM44 (via coiled coil). Interacts with TRIM28; this interaction prevents TRIM28 activity on BCL2A1. Interacts with TRIM41; this interaction prevents TRIM41 activity on ZSCAN2. Interacts with BECN1. Interacts with NFATC3 and NFATC4; these interactions prevent NFATC3 and NFATC4 nuclear localization. In terms of processing, auto-ubiquitinated. In terms of tissue distribution, almost exclusively in the testis.

The protein localises to the cytoplasm. The protein resides in the lysosome. It catalyses the reaction S-ubiquitinyl-[E2 ubiquitin-conjugating enzyme]-L-cysteine + [acceptor protein]-L-lysine = [E2 ubiquitin-conjugating enzyme]-L-cysteine + N(6)-ubiquitinyl-[acceptor protein]-L-lysine.. It functions in the pathway protein modification; protein ubiquitination. Its function is as follows. E3 ubiquitin ligase that plays important roles in the regulation of neuronal apoptosis, selective autophagy or cell proliferation. Stimulates the degradation of kinetochore ZW10 interacting protein ZWINT in a proteasome-dependent manner, leading to negative regulation of cell proliferation. Inhibits autophagic degradation of diverse known targets while contributing to autophagy of midbodies. Autophagy-inhibitory activity involves MCL1, which TRIM17 assembles into complexes with the key autophagy regulator BECN1. Controls neuronal apoptosis by mediating ubiquitination and degradation of MCL1 to initiate neuronal death. In addition, regulates NFAT transcription factors NFATC3 and NFATC4 activities by preventing their nuclear localization, thus inhibiting their transcriptional activities. Decreases TRIM41-mediated degradation of ZSCAN2 thereby stimulating alpha-synuclein/SNCA transcription in neuronal cells. Prevents the E3 ubiquitin-ligase activity of TRIM28 and its interaction with anti-apoptotic BCL2A1, blocking TRIM28 from ubiquitinating BCL2A1. This Mus musculus (Mouse) protein is E3 ubiquitin-protein ligase TRIM17 (Trim17).